The primary structure comprises 342 residues: S-adenosylmethionine:tRNA ribosyltransferase-isomerase (342 aa).

This sequence belongs to the QueA family. In terms of assembly, monomer.

It localises to the cytoplasm. It catalyses the reaction 7-aminomethyl-7-carbaguanosine(34) in tRNA + S-adenosyl-L-methionine = epoxyqueuosine(34) in tRNA + adenine + L-methionine + 2 H(+). The protein operates within tRNA modification; tRNA-queuosine biosynthesis. Functionally, transfers and isomerizes the ribose moiety from AdoMet to the 7-aminomethyl group of 7-deazaguanine (preQ1-tRNA) to give epoxyqueuosine (oQ-tRNA). In Brevibacillus brevis (strain 47 / JCM 6285 / NBRC 100599), this protein is S-adenosylmethionine:tRNA ribosyltransferase-isomerase.